We begin with the raw amino-acid sequence, 193 residues long: Ferredoxin-2, mitochondrial (193 aa).

Residues 38 to 70 are disordered; that stretch reads QATPEKLETSNEEEGSSSAQITAGVESDAENQR. One can recognise a 2Fe-2S ferredoxin-type domain in the interval 78-180; sequence VEVVFLDRSG…GAEFTLPKIT (103 aa). 4 residues coordinate [2Fe-2S] cluster: Cys-115, Cys-121, Cys-124, and Cys-161.

Belongs to the adrenodoxin/putidaredoxin family. In terms of assembly, component of the mitochondrial core iron-sulfur cluster (ISC) complex composed of NFS1, LYRM4, NDUFAB1, ISCU, FXN, and FDX2; this complex is a heterohexamer containing two copies of each monomer. [2Fe-2S] cluster serves as cofactor.

The protein localises to the mitochondrion. Its subcellular location is the mitochondrion matrix. Its function is as follows. Electron donor, of the core iron-sulfur cluster (ISC) assembly complex, that acts to reduce the persulfide into sulfide during [2Fe-2S] clusters assembly on the scaffolding protein ISCU. The core iron-sulfur cluster (ISC) assembly complex is involved in the de novo synthesis of a [2Fe-2S] cluster, the first step of the mitochondrial iron-sulfur protein biogenesis. This process is initiated by the cysteine desulfurase complex (NFS1:LYRM4:NDUFAB1) that produces persulfide which is delivered on the scaffold protein ISCU in a FXN-dependent manner. Then this complex is stabilized by FDX2 which provides reducing equivalents to accomplish the [2Fe-2S] cluster assembly. Finally, the [2Fe-2S] cluster is transferred from ISCU to chaperone proteins, including HSCB, HSPA9 and GLRX5. Essential for coenzyme Q biosynthesis: together with FDXR, transfers the electrons required for the hydroxylation reaction performed by COQ6. The polypeptide is Ferredoxin-2, mitochondrial (Xenopus laevis (African clawed frog)).